A 473-amino-acid polypeptide reads, in one-letter code: Proline transporter 1 (473 aa).

A compositionally biased stretch (basic and acidic residues) spans 1-11 (MDQHQLDEENQ). Residues 1–31 (MDQHQLDEENQRAALFHSSAPSSSLGADGEE) are disordered. The next 11 helical transmembrane spans lie at 65-85 (PWYQ…VLGY), 88-108 (SIMV…AAAI), 145-165 (LTWA…IILA), 188-208 (IALS…LSAL), 210-230 (IWLG…FVMS), 252-272 (IFTT…GMLP), 290-310 (LWFQ…MGYW), 333-353 (VANL…ASPM), 378-398 (VGVR…LPFL), 401-421 (FMSL…ANHM), and 437-457 (WHWL…VAAV).

It belongs to the amino acid/polyamine transporter 2 family. Amino acid/auxin permease (AAAP) (TC 2.A.18.3) subfamily. Expressed in roots, leaf blades and sheaths, stems and young panicle.

It localises to the cell membrane. Functionally, proline transporter that mediates proline transport across the plasma membrane when expressed in a heterologous system (Xenopus oocytes). The protein is Proline transporter 1 (PROT1) of Oryza sativa subsp. japonica (Rice).